Consider the following 322-residue polypeptide: Ferrochelatase (322 aa).

Positions 194 and 275 each coordinate Fe cation.

It belongs to the ferrochelatase family.

The protein localises to the cytoplasm. It catalyses the reaction heme b + 2 H(+) = protoporphyrin IX + Fe(2+). The protein operates within porphyrin-containing compound metabolism; protoheme biosynthesis; protoheme from protoporphyrin-IX: step 1/1. Catalyzes the ferrous insertion into protoporphyrin IX. In Yersinia enterocolitica serotype O:8 / biotype 1B (strain NCTC 13174 / 8081), this protein is Ferrochelatase.